Reading from the N-terminus, the 170-residue chain is Ribosome maturation factor RimM (170 aa).

The PRC barrel domain maps to 93–165 (PDEFHDHELI…RVVIDPPPGL (73 aa)).

Belongs to the RimM family. As to quaternary structure, binds ribosomal protein uS19.

It is found in the cytoplasm. In terms of biological role, an accessory protein needed during the final step in the assembly of 30S ribosomal subunit, possibly for assembly of the head region. Essential for efficient processing of 16S rRNA. May be needed both before and after RbfA during the maturation of 16S rRNA. It has affinity for free ribosomal 30S subunits but not for 70S ribosomes. This is Ribosome maturation factor RimM from Thermobifida fusca (strain YX).